Here is a 91-residue protein sequence, read N- to C-terminus: DNA-binding protein HU (91 aa).

The protein belongs to the bacterial histone-like protein family. In terms of assembly, homodimer.

In terms of biological role, histone-like DNA-binding protein which is capable of wrapping DNA to stabilize it, and thus to prevent its denaturation under extreme environmental conditions. This Streptococcus thermophilus protein is DNA-binding protein HU (hup).